The primary structure comprises 382 residues: Na(+)/H(+) antiporter NhaA (382 aa).

11 helical membrane-spanning segments follow: residues Ala-14–Phe-34, Met-49–Leu-69, Ile-87–Phe-107, Gly-117–Gly-137, Val-146–Phe-166, Leu-171–Ser-191, Phe-205–Leu-225, Ala-247–Ile-267, Val-285–Val-305, Ile-321–Leu-341, and Leu-356–Ser-376.

Belongs to the NhaA Na(+)/H(+) (TC 2.A.33) antiporter family.

The protein localises to the cell inner membrane. The catalysed reaction is Na(+)(in) + 2 H(+)(out) = Na(+)(out) + 2 H(+)(in). Functionally, na(+)/H(+) antiporter that extrudes sodium in exchange for external protons. The polypeptide is Na(+)/H(+) antiporter NhaA (Aliivibrio salmonicida (strain LFI1238) (Vibrio salmonicida (strain LFI1238))).